Here is a 775-residue protein sequence, read N- to C-terminus: Melanoma-associated antigen D1 (775 aa).

The segment at 37-330 (SEAPPTSQAT…PARQTPSAWQ (294 aa)) is disordered. Positions 39 to 50 (APPTSQATAAAS) are enriched in low complexity. Composition is skewed to polar residues over residues 52-63 (PNASPQSSQPPT), 84-100 (KAQNATTKGPNDYSQAR), 107-120 (KNQSKAAFKSQNGT), 149-178 (GQNSTKAGPGTTYNFPQSPSANEMTNNQPK), 221-235 (AQTSADGSQTQNVES), 247-258 (VNNLNVEENNSG), and 296-308 (LAWQNPSGWQNQT). Tandem repeats lie at residues 292 to 297 (WQTPLA), 298 to 303 (WQNPSG), 304 to 309 (WQNQTA), 329 to 334 (WQNPVA), 335 to 340 (WQNPVI), 341 to 346 (WPNPVI), 347 to 352 (WQNPVI), 353 to 358 (WPNPIV), 359 to 364 (WPGPIV), 365 to 370 (WPNPMA), 371 to 376 (WQSTPG), 377 to 382 (WQSPPS), 383 to 388 (WQAPPS), 389 to 394 (WQSPQD), 395 to 400 (WQGPPD), 401 to 406 (WQVPPD), 407 to 412 (WSMPPD), 413 to 418 (WSFPSD), and 419 to 424 (WPFPPD). The segment at 292–441 (WQTPLAWQNP…IPPDWQNLRP (150 aa)) is 22 X 6 AA tandem repeats of W-[PQ]-X-P-X-X. The segment covering 309–326 (ARQTPPAARQSPPARQTP) has biased composition (low complexity). Residues 374 to 409 (TPGWQSPPSWQAPPSWQSPQDWQGPPDWQVPPDWSM) form a disordered region. Residues 375 to 406 (PGWQSPPSWQAPPSWQSPQDWQGPPDWQVPPD) are compositionally biased toward low complexity. A 20; approximate repeat occupies 425 to 429 (WIPAD). Tandem repeats lie at residues 430–435 (WPIPPD) and 436–441 (WQNLRP). Positions 437–452 (QNLRPSPNLRSSSNSR) are enriched in low complexity. A disordered region spans residues 437-463 (QNLRPSPNLRSSSNSRASQNQGPPQPR). Positions 468-666 (LQERANKLVK…RDWTAQFMEA (199 aa)) constitute an MAGE domain.

In terms of assembly, interacts with DLX5, DLX7 and MSX2 and forms homomultimers. Interacts with UNC5A. Interacts with TRIM28 and PJA1. Interacts with NGFR/p75NTR and RORA. Ubiquitously expressed in many adult tissues, except for the spleen. Expressed in osteoblastic and chondrogenic cell lines and also during embryonic development.

The protein localises to the nucleus. Its subcellular location is the cytoplasm. It is found in the cell membrane. In terms of biological role, involved in the apoptotic response after nerve growth factor (NGF) binding in neuronal cells. Inhibits cell cycle progression, and facilitates NGFR-mediated apoptosis. May act as a regulator of the function of DLX family members. May enhance ubiquitin ligase activity of RING-type zinc finger-containing E3 ubiquitin-protein ligases. Proposed to act through recruitment and/or stabilization of the Ubl-conjugating enzyme (E2) at the E3:substrate complex. Plays a role in the circadian rhythm regulation. May act as RORA coregulator, modulating the expression of core clock genes such as BMAL1 and NFIL3, induced, or NR1D1, repressed. The protein is Melanoma-associated antigen D1 (Maged1) of Mus musculus (Mouse).